A 360-amino-acid chain; its full sequence is Protein DVR-1 (360 aa).

The signal sequence occupies residues 1–16 (MVWLRLWAFLHILAIV). Residues 17–246 (TLDPELKRRE…LRCKRPRRKR (230 aa)) constitute a propeptide that is removed on maturation. 3 N-linked (GlcNAc...) asparagine glycosylation sites follow: N113, N181, and N301. Intrachain disulfides connect C259/C325, C288/C357, and C292/C359.

Belongs to the TGF-beta family. As to quaternary structure, homodimer. In terms of tissue distribution, vegetal region of the egg.

The protein resides in the secreted. Its function is as follows. Serves to facilitate the differentiation of either mesoderm or endoderm either as a cofactor in an instructive signal or by providing permissive environment. The protein is Protein DVR-1 (dvr1) of Xenopus laevis (African clawed frog).